A 121-amino-acid polypeptide reads, in one-letter code: Putative SNURF-like protein (121 aa).

This sequence belongs to the SNURF family.

This Homo sapiens (Human) protein is Putative SNURF-like protein (SNURFL).